We begin with the raw amino-acid sequence, 260 residues long: Phosphatidylglycerol--prolipoprotein diacylglyceryl transferase (260 aa).

The next 3 helical transmembrane spans lie at 16–36, 55–75, and 87–107; these read LEFR…YFIV, VIFS…ILFY, and LFAV…VILA. Residue R138 coordinates a 1,2-diacyl-sn-glycero-3-phospho-(1'-sn-glycerol). 2 consecutive transmembrane segments (helical) span residues 198–218 and 232–252; these read GVVF…VEFF and FSMG…MAVL.

Belongs to the Lgt family.

The protein localises to the cell inner membrane. The catalysed reaction is L-cysteinyl-[prolipoprotein] + a 1,2-diacyl-sn-glycero-3-phospho-(1'-sn-glycerol) = an S-1,2-diacyl-sn-glyceryl-L-cysteinyl-[prolipoprotein] + sn-glycerol 1-phosphate + H(+). It functions in the pathway protein modification; lipoprotein biosynthesis (diacylglyceryl transfer). In terms of biological role, catalyzes the transfer of the diacylglyceryl group from phosphatidylglycerol to the sulfhydryl group of the N-terminal cysteine of a prolipoprotein, the first step in the formation of mature lipoproteins. This is Phosphatidylglycerol--prolipoprotein diacylglyceryl transferase from Geobacter sulfurreducens (strain ATCC 51573 / DSM 12127 / PCA).